Consider the following 279-residue polypeptide: Methylthioribulose-1-phosphate dehydratase (279 aa).

Cys-132 contributes to the substrate binding site. Zn(2+)-binding residues include His-150 and His-152. Glu-175 functions as the Proton donor/acceptor in the catalytic mechanism. A Zn(2+)-binding site is contributed by His-240.

This sequence belongs to the aldolase class II family. MtnB subfamily. The cofactor is Zn(2+).

It is found in the cytoplasm. It carries out the reaction 5-(methylsulfanyl)-D-ribulose 1-phosphate = 5-methylsulfanyl-2,3-dioxopentyl phosphate + H2O. Its pathway is amino-acid biosynthesis; L-methionine biosynthesis via salvage pathway; L-methionine from S-methyl-5-thio-alpha-D-ribose 1-phosphate: step 2/6. In terms of biological role, catalyzes the dehydration of methylthioribulose-1-phosphate (MTRu-1-P) into 2,3-diketo-5-methylthiopentyl-1-phosphate (DK-MTP-1-P). The chain is Methylthioribulose-1-phosphate dehydratase from Candida tropicalis (strain ATCC MYA-3404 / T1) (Yeast).